The primary structure comprises 200 residues: NADH-ubiquinone oxidoreductase 21.3 kDa subunit (200 aa).

The next 3 helical transmembrane spans lie at 16 to 36 (IKSG…MASL), 48 to 68 (MHVF…GGIY), and 105 to 125 (FPVI…FAFS).

As to quaternary structure, complex I is composed of about 40 different subunits.

Its subcellular location is the mitochondrion inner membrane. It catalyses the reaction a ubiquinone + NADH + 5 H(+)(in) = a ubiquinol + NAD(+) + 4 H(+)(out). In terms of biological role, transfer of electrons from NADH to the respiratory chain. The immediate electron acceptor for the enzyme is believed to be ubiquinone. The polypeptide is NADH-ubiquinone oxidoreductase 21.3 kDa subunit (Neurospora crassa (strain ATCC 24698 / 74-OR23-1A / CBS 708.71 / DSM 1257 / FGSC 987)).